We begin with the raw amino-acid sequence, 308 residues long: Protoheme IX farnesyltransferase (308 aa).

A run of 8 helical transmembrane segments spans residues leucine 20–isoleucine 40, alanine 50–alanine 70, asparagine 102–threonine 122, leucine 124–tryptophan 144, threonine 149–serine 169, alanine 170–threonine 190, leucine 227–glycine 249, and tyrosine 288–histidine 308.

Belongs to the UbiA prenyltransferase family. Protoheme IX farnesyltransferase subfamily.

It is found in the cell membrane. The catalysed reaction is heme b + (2E,6E)-farnesyl diphosphate + H2O = Fe(II)-heme o + diphosphate. It participates in porphyrin-containing compound metabolism; heme O biosynthesis; heme O from protoheme: step 1/1. Its function is as follows. Converts heme B (protoheme IX) to heme O by substitution of the vinyl group on carbon 2 of heme B porphyrin ring with a hydroxyethyl farnesyl side group. This chain is Protoheme IX farnesyltransferase, found in Mycobacterium bovis (strain BCG / Pasteur 1173P2).